Here is a 41-residue protein sequence, read N- to C-terminus: MKVRNSLKSLRSRHRDNRLVRRKGRVYVINKVQRRFKARQG.

It belongs to the bacterial ribosomal protein bL36 family.

The sequence is that of Large ribosomal subunit protein bL36 from Rhodopseudomonas palustris (strain BisB18).